The following is a 258-amino-acid chain: MQTPHSQPESAPQGEQSTHFGFQSVPEADKARKVAEVFHSVASRYDVMNDLMSAGLHRVWKAFTIGRAAVRPGMKVLDIAGGTGDLARAFAKRAGPSGEVWLTDINESMLRVGRDRLTDSGLLVPTAVCDAERLPFPSQYFDRVSVAFGLRNMTHKDRALAEMTRVLKPGGKLLVLEFSRVAKPLAPAYDWYSFNVLPWMGKKVANDEASYRYLAESIRMHPDQETLAGMLRDAGLDRVQYFNLTAGVAALHEGVRLG.

S-adenosyl-L-methionine contacts are provided by residues T83, D104, and 130–131; that span reads DA.

This sequence belongs to the class I-like SAM-binding methyltransferase superfamily. MenG/UbiE family.

The enzyme catalyses a 2-demethylmenaquinol + S-adenosyl-L-methionine = a menaquinol + S-adenosyl-L-homocysteine + H(+). It catalyses the reaction a 2-methoxy-6-(all-trans-polyprenyl)benzene-1,4-diol + S-adenosyl-L-methionine = a 5-methoxy-2-methyl-3-(all-trans-polyprenyl)benzene-1,4-diol + S-adenosyl-L-homocysteine + H(+). It participates in quinol/quinone metabolism; menaquinone biosynthesis; menaquinol from 1,4-dihydroxy-2-naphthoate: step 2/2. The protein operates within cofactor biosynthesis; ubiquinone biosynthesis. In terms of biological role, methyltransferase required for the conversion of demethylmenaquinol (DMKH2) to menaquinol (MKH2) and the conversion of 2-polyprenyl-6-methoxy-1,4-benzoquinol (DDMQH2) to 2-polyprenyl-3-methyl-6-methoxy-1,4-benzoquinol (DMQH2). This is Ubiquinone/menaquinone biosynthesis C-methyltransferase UbiE from Bordetella bronchiseptica (strain ATCC BAA-588 / NCTC 13252 / RB50) (Alcaligenes bronchisepticus).